A 257-amino-acid chain; its full sequence is MLLVVSPAKKLDFESPLATEKFSQPGLLEQSQLLIDDCIKLSPSEIASLMKLSDKLAGLNAARFGQWSTPFTQDNARQAILSFNGDVYTGLDAQSFSDEDFEFAQKNFRILSGLYGLLKPLDLMQAYRLEMGCKLGNSRGDNLYQFWGEIITDELNKTLSELDDDVLINLASTEYFKSVKKKSLNATIITPTFKDWKNGQYKIISFFAKKARGLMARYIIQNKLTSVEQIKTFDLAGYQYNEAMSKDNDWVFTRKES.

It belongs to the UPF0246 family.

In Colwellia psychrerythraea (strain 34H / ATCC BAA-681) (Vibrio psychroerythus), this protein is UPF0246 protein CPS_4102.